A 642-amino-acid chain; its full sequence is Threonine--tRNA ligase (642 aa).

Residues 1-61 (MPVIRFYDGS…REDAFIEFVD (61 aa)) enclose the TGS domain. The interval 243–534 (DHRKIGKFLQ…LIEECSGNLP (292 aa)) is catalytic. Cys-334, His-385, and His-511 together coordinate Zn(2+).

It belongs to the class-II aminoacyl-tRNA synthetase family. In terms of assembly, homodimer. It depends on Zn(2+) as a cofactor.

It localises to the cytoplasm. The catalysed reaction is tRNA(Thr) + L-threonine + ATP = L-threonyl-tRNA(Thr) + AMP + diphosphate + H(+). Its function is as follows. Catalyzes the attachment of threonine to tRNA(Thr) in a two-step reaction: L-threonine is first activated by ATP to form Thr-AMP and then transferred to the acceptor end of tRNA(Thr). Also edits incorrectly charged L-seryl-tRNA(Thr). The polypeptide is Threonine--tRNA ligase (Buchnera aphidicola subsp. Acyrthosiphon pisum (strain Tuc7)).